The following is a 430-amino-acid chain: Serine--tRNA ligase (430 aa).

Position 234–236 (234–236 (TAE)) interacts with L-serine. 265-267 (RRE) provides a ligand contact to ATP. E288 contacts L-serine. Position 352-355 (352-355 (EISS)) interacts with ATP. S388 is a binding site for L-serine.

It belongs to the class-II aminoacyl-tRNA synthetase family. Type-1 seryl-tRNA synthetase subfamily. As to quaternary structure, homodimer. The tRNA molecule binds across the dimer.

The protein localises to the cytoplasm. It catalyses the reaction tRNA(Ser) + L-serine + ATP = L-seryl-tRNA(Ser) + AMP + diphosphate + H(+). The enzyme catalyses tRNA(Sec) + L-serine + ATP = L-seryl-tRNA(Sec) + AMP + diphosphate + H(+). Its pathway is aminoacyl-tRNA biosynthesis; selenocysteinyl-tRNA(Sec) biosynthesis; L-seryl-tRNA(Sec) from L-serine and tRNA(Sec): step 1/1. Its function is as follows. Catalyzes the attachment of serine to tRNA(Ser). Is also able to aminoacylate tRNA(Sec) with serine, to form the misacylated tRNA L-seryl-tRNA(Sec), which will be further converted into selenocysteinyl-tRNA(Sec). The polypeptide is Serine--tRNA ligase (Thermosynechococcus vestitus (strain NIES-2133 / IAM M-273 / BP-1)).